Consider the following 1297-residue polypeptide: Phosphoribosylformylglycinamidine synthase (1297 aa).

The segment at 301-329 is disordered; it reads TAISPFPGAATGSGGEIRDEGATGRGAKP. ATP is bound at residue 308-319; sequence GAATGSGGEIRD. Positions 680, 719, 723, and 887 each coordinate Mg(2+). Ser-889 serves as a coordination point for ATP. A Glutamine amidotransferase type-1 domain is found at 1045–1297; it reads IAILREQGVN…RLFRNARMVF (253 aa). The active-site Nucleophile is Cys-1138. Residues His-1263 and Glu-1265 contribute to the active site.

The protein in the N-terminal section; belongs to the FGAMS family. In terms of assembly, monomer.

Its subcellular location is the cytoplasm. It carries out the reaction N(2)-formyl-N(1)-(5-phospho-beta-D-ribosyl)glycinamide + L-glutamine + ATP + H2O = 2-formamido-N(1)-(5-O-phospho-beta-D-ribosyl)acetamidine + L-glutamate + ADP + phosphate + H(+). Its pathway is purine metabolism; IMP biosynthesis via de novo pathway; 5-amino-1-(5-phospho-D-ribosyl)imidazole from N(2)-formyl-N(1)-(5-phospho-D-ribosyl)glycinamide: step 1/2. Functionally, phosphoribosylformylglycinamidine synthase involved in the purines biosynthetic pathway. Catalyzes the ATP-dependent conversion of formylglycinamide ribonucleotide (FGAR) and glutamine to yield formylglycinamidine ribonucleotide (FGAM) and glutamate. The chain is Phosphoribosylformylglycinamidine synthase from Haemophilus influenzae (strain ATCC 51907 / DSM 11121 / KW20 / Rd).